The primary structure comprises 506 residues: 2-isopropylmalate synthase (506 aa).

A Pyruvate carboxyltransferase domain is found at 6 to 267 (IIVFDTTLRD…YTDIVTKEIY (262 aa)). Mn(2+) contacts are provided by aspartate 15, histidine 201, histidine 203, and asparagine 237. A regulatory domain region spans residues 391 to 506 (SIQTLSTSSC…LNSYLSMKNR (116 aa)).

This sequence belongs to the alpha-IPM synthase/homocitrate synthase family. LeuA type 1 subfamily. Homodimer. It depends on Mn(2+) as a cofactor.

It localises to the cytoplasm. It catalyses the reaction 3-methyl-2-oxobutanoate + acetyl-CoA + H2O = (2S)-2-isopropylmalate + CoA + H(+). Its pathway is amino-acid biosynthesis; L-leucine biosynthesis; L-leucine from 3-methyl-2-oxobutanoate: step 1/4. Functionally, catalyzes the condensation of the acetyl group of acetyl-CoA with 3-methyl-2-oxobutanoate (2-ketoisovalerate) to form 3-carboxy-3-hydroxy-4-methylpentanoate (2-isopropylmalate). The sequence is that of 2-isopropylmalate synthase from Campylobacter fetus subsp. fetus (strain 82-40).